The primary structure comprises 545 residues: Capsular polysaccharide phosphotransferase SacB (545 aa).

Belongs to the stealth family.

May be the polymerase that links individual UDP-N-acetyl-D-mannosamine monomers. In serotype A the capsule is composed of repeated units of (alpha 1-6)-linked N-acetyl-D-mannosamine-1-phosphate. The protein is Capsular polysaccharide phosphotransferase SacB (sacB) of Neisseria meningitidis serogroup A.